A 255-amino-acid chain; its full sequence is Thiazole synthase (255 aa).

The active-site Schiff-base intermediate with DXP is the K95. Residues G156, 182–183 (AG), and 204–205 (NT) contribute to the 1-deoxy-D-xylulose 5-phosphate site.

The protein belongs to the ThiG family. Homotetramer. Forms heterodimers with either ThiH or ThiS.

It localises to the cytoplasm. The catalysed reaction is [ThiS sulfur-carrier protein]-C-terminal-Gly-aminoethanethioate + 2-iminoacetate + 1-deoxy-D-xylulose 5-phosphate = [ThiS sulfur-carrier protein]-C-terminal Gly-Gly + 2-[(2R,5Z)-2-carboxy-4-methylthiazol-5(2H)-ylidene]ethyl phosphate + 2 H2O + H(+). It participates in cofactor biosynthesis; thiamine diphosphate biosynthesis. In terms of biological role, catalyzes the rearrangement of 1-deoxy-D-xylulose 5-phosphate (DXP) to produce the thiazole phosphate moiety of thiamine. Sulfur is provided by the thiocarboxylate moiety of the carrier protein ThiS. In vitro, sulfur can be provided by H(2)S. The protein is Thiazole synthase of Aeromonas salmonicida (strain A449).